Consider the following 407-residue polypeptide: Argininosuccinate synthase (407 aa).

8 to 16 (AYSGGLDTT) contributes to the ATP binding site. L-citrulline is bound by residues Tyr86 and Ser91. Gly116 contacts ATP. Residues Thr118, Asn122, and Asp123 each contribute to the L-aspartate site. L-citrulline is bound at residue Asn122. Residues Arg126, Ser178, Ser187, Glu264, and Tyr276 each contribute to the L-citrulline site.

The protein belongs to the argininosuccinate synthase family. Type 1 subfamily. In terms of assembly, homotetramer.

The protein localises to the cytoplasm. It carries out the reaction L-citrulline + L-aspartate + ATP = 2-(N(omega)-L-arginino)succinate + AMP + diphosphate + H(+). It participates in amino-acid biosynthesis; L-arginine biosynthesis; L-arginine from L-ornithine and carbamoyl phosphate: step 2/3. This is Argininosuccinate synthase from Lachnoclostridium phytofermentans (strain ATCC 700394 / DSM 18823 / ISDg) (Clostridium phytofermentans).